Consider the following 568-residue polypeptide: Urease subunit beta (568 aa).

The region spanning 131-568 (GGIDTHIHFI…LSLAQLYNLF (438 aa)) is the Urease domain. 3 residues coordinate Ni(2+): H136, H138, and K219. An N6-carboxylysine modification is found at K219. H221 lines the substrate pocket. The Ni(2+) site is built by H248 and H274. Catalysis depends on H321, which acts as the Proton donor. Position 361 (D361) interacts with Ni(2+).

This sequence belongs to the metallo-dependent hydrolases superfamily. Urease alpha subunit family. As to quaternary structure, heterohexamer of 3 UreA (alpha) and 3 UreB (beta) subunits. Ni cation serves as cofactor. In terms of processing, carboxylation allows a single lysine to coordinate two nickel ions.

Its subcellular location is the cytoplasm. The enzyme catalyses urea + 2 H2O + H(+) = hydrogencarbonate + 2 NH4(+). It functions in the pathway nitrogen metabolism; urea degradation; CO(2) and NH(3) from urea (urease route): step 1/1. The chain is Urease subunit beta from Helicobacter heilmannii.